Here is a 628-residue protein sequence, read N- to C-terminus: MAAAAVDSAMEVVPALAEEAAPEVAGLSCLVNLPGEVLEYILCCGSLTAADIGRVSSTCRRLRELCQSSGKVWKEQFRVRWPSLMKHYSPTDYVNWLEEYKVRQKAGLEARKIVASFSKRFFSEHVPCNGFSDIENLEGPEIFFEDELVCILNMEGRKALTWKYYAKKILYYLRQQKILNNLKAFLQQPDDYESYLEGAVYIDQYCNPLSDISLKDIQAQIDSIVELVCKTLRGINSRHPSLAFKAGESSMIMEIELQSQVLDAMNYVLYDQLKFKGNRMDYYNALNLYMHQVLIRRTGIPISMSLLYLTIARQLGVPLEPVNFPSHFLLRWCQGAEGATLDIFDYIYIDAFGKGKQLTVKECEYLIGQHVTAALYGVVNVKKVLQRMVGNLLSLGKREGIDQSYQLLRDSLDLYLAMYPDQVQLLLLQARLYFHLGIWPEKSFCLVLKVLDILQHIQTLDPGQHGAVGYLVQHTLEHIERKKEEVGVEVKLRSDEKHRDVCYSIGLIMKHKRYGYNCVIYGWDPTCMMGHEWIRNMNVHSLPHGHHQPFYNVLVEDGSCRYAAQENLEYNVEPQEISHPDVGRYFSEFTGTHYIPNAELEIRYPEDLEFVYETVQNIYSAKKENIDE.

The region spanning 28 to 84 is the F-box domain; it reads SCLVNLPGEVLEYILCCGSLTAADIGRVSSTCRRLRELCQSSGKVWKEQFRVRWPSL.

As to quaternary structure, directly interacts with SKP1 and CUL1.

Functionally, substrate-recognition component of the SCF (SKP1-CUL1-F-box protein)-type E3 ubiquitin ligase complex. In Homo sapiens (Human), this protein is F-box only protein 21 (FBXO21).